A 452-amino-acid polypeptide reads, in one-letter code: Tripartite motif-containing protein 49D (452 aa).

An RING-type zinc finger spans residues C15–L56. The B box-type zinc-finger motif lies at S88–A129. Residues C93, H96, C115, and H121 each contribute to the Zn(2+) site. The B30.2/SPRY domain occupies E269 to L452.

Belongs to the TRIM/RBCC family.

This Homo sapiens (Human) protein is Tripartite motif-containing protein 49D.